The following is a 65-amino-acid chain: MPKMKTKKSASKRFTARPNGSFKRGQAFKRHILTKKTTKNKRQLRGTQDVHETNLKSVRAMMPYA.

Basic residues-rich tracts occupy residues 1–15 (MPKMKTKKSASKRFT) and 26–44 (QAFKRHILTKKTTKNKRQL). Residues 1-65 (MPKMKTKKSA…KSVRAMMPYA (65 aa)) are disordered.

It belongs to the bacterial ribosomal protein bL35 family.

The sequence is that of Large ribosomal subunit protein bL35 from Cupriavidus metallidurans (strain ATCC 43123 / DSM 2839 / NBRC 102507 / CH34) (Ralstonia metallidurans).